We begin with the raw amino-acid sequence, 347 residues long: HTH-type transcriptional regulator PhcA (347 aa).

One can recognise an HTH lysR-type domain in the interval 1–61; that stretch reads MVNVDTKLLV…IRVPHGLTPT (61 aa). A DNA-binding region (H-T-H motif) is located at residues 21–40; sequence ATYVAEKMHMTAPAVSHSLG. The tract at residues 316 to 347 is disordered; that stretch reads PMHPPMLTDDSGKSGKTGKGDAEKEDESRLSV. Positions 325 to 347 are enriched in basic and acidic residues; sequence DSGKSGKTGKGDAEKEDESRLSV.

Belongs to the LysR transcriptional regulatory family.

Its function is as follows. Regulates the transcription of one or more of the genes involved in virulence. The protein is HTH-type transcriptional regulator PhcA (phcA) of Ralstonia nicotianae (strain ATCC BAA-1114 / GMI1000) (Ralstonia solanacearum).